The following is a 273-amino-acid chain: Nitrogenase iron protein (273 aa).

8-15 (GKGGIGKS) serves as a coordination point for ATP. Cys95 contributes to the [4Fe-4S] cluster binding site. Position 98 is an ADP-ribosylarginine; by dinitrogenase reductase ADP-ribosyltransferase (Arg98). A [4Fe-4S] cluster-binding site is contributed by Cys130.

Belongs to the NifH/BchL/ChlL family. Homodimer. [4Fe-4S] cluster is required as a cofactor. The reversible ADP-ribosylation of Arg-98 inactivates the nitrogenase reductase and regulates nitrogenase activity.

It carries out the reaction N2 + 8 reduced [2Fe-2S]-[ferredoxin] + 16 ATP + 16 H2O = H2 + 8 oxidized [2Fe-2S]-[ferredoxin] + 2 NH4(+) + 16 ADP + 16 phosphate + 6 H(+). In terms of biological role, the key enzymatic reactions in nitrogen fixation are catalyzed by the nitrogenase complex, which has 2 components: the iron protein and the molybdenum-iron protein. The sequence is that of Nitrogenase iron protein from Methanosarcina mazei (strain ATCC BAA-159 / DSM 3647 / Goe1 / Go1 / JCM 11833 / OCM 88) (Methanosarcina frisia).